The sequence spans 377 residues: Lipoyl synthase, mitochondrial (377 aa).

A mitochondrion-targeting transit peptide spans 1-77 (MFRRGGRILN…LPNGSVHKRL (77 aa)). C107, C112, C118, C138, C142, C145, and S353 together coordinate [4Fe-4S] cluster. A Radical SAM core domain is found at 123–342 (DKTRATATIM…RKRAEELGFL (220 aa)).

It belongs to the radical SAM superfamily. Lipoyl synthase family. [4Fe-4S] cluster is required as a cofactor.

It is found in the mitochondrion. The catalysed reaction is [[Fe-S] cluster scaffold protein carrying a second [4Fe-4S](2+) cluster] + N(6)-octanoyl-L-lysyl-[protein] + 2 oxidized [2Fe-2S]-[ferredoxin] + 2 S-adenosyl-L-methionine + 4 H(+) = [[Fe-S] cluster scaffold protein] + N(6)-[(R)-dihydrolipoyl]-L-lysyl-[protein] + 4 Fe(3+) + 2 hydrogen sulfide + 2 5'-deoxyadenosine + 2 L-methionine + 2 reduced [2Fe-2S]-[ferredoxin]. It functions in the pathway protein modification; protein lipoylation via endogenous pathway; protein N(6)-(lipoyl)lysine from octanoyl-[acyl-carrier-protein]: step 2/2. Its function is as follows. Catalyzes the radical-mediated insertion of two sulfur atoms into the C-6 and C-8 positions of the octanoyl moiety bound to the lipoyl domains of lipoate-dependent enzymes, thereby converting the octanoylated domains into lipoylated derivatives. The chain is Lipoyl synthase, mitochondrial from Schizosaccharomyces japonicus (strain yFS275 / FY16936) (Fission yeast).